We begin with the raw amino-acid sequence, 398 residues long: MDLQLKQWRSQQQQQHQTESEEQPSAAKIPKHVFDQIHSHTATSTALPLFTPEPTSSKLSSLSPDSSSRFPKMGSFFSWAQWQELELQALIYRYMLAGAAVPQELLLPIKKSLLHLSPSYFLHHPLQHLPHYQPAWYLGRAAMDPEPGRCRRTDGKKWRCSRDVFAGHKYCERHMHRGRNRSRKPVETPTTVNATATSMASSVAAAATTTTATTTSTFAFGGGGGSEEVVGQGGSFFFSGSSNSSSELLHLSQSCSEMKQESNNMNNKRPYESHIGFSNNRSDGGHILRPFFDDWPRSSLQEADNSSSPMSSATCLSISMPGNSSSDVSLKLSTGNEEGARSNNNGRDQQNMSWWSGGGSNHHHHNMGGPLAEALRSSSSSSPTSVLHQLGVSTQAFH.

Low complexity predominate over residues 1 to 17; the sequence is MDLQLKQWRSQQQQQHQ. The disordered stretch occupies residues 1–32; that stretch reads MDLQLKQWRSQQQQQHQTESEEQPSAAKIPKH. Positions 76-111 constitute a QLQ domain; it reads FFSWAQWQELELQALIYRYMLAGAAVPQELLLPIKK. A WRC domain is found at 144 to 188; the sequence is DPEPGRCRRTDGKKWRCSRDVFAGHKYCERHMHRGRNRSRKPVET. 2 consecutive short sequence motifs (bipartite nuclear localization signal) follow at residues 149-159 and 177-184; these read RCRRTDGKKWR and RGRNRSRK. 2 stretches are compositionally biased toward polar residues: residues 299–350 and 383–398; these read SLQE…RDQQ and PTSVLHQLGVSTQAFH. Residues 299 to 398 form a disordered region; that stretch reads SLQEADNSSS…QLGVSTQAFH (100 aa).

Belongs to the GRF family. In terms of tissue distribution, strongly expressed in actively growing and developing tissues, such as roots, upper stems, and shoot tips containing the shoot apical meristem (SAM) and flower buds. Also expressed in mature flowers, but weakly expressed in mature stems and leaves.

It localises to the nucleus. Transcription activator that plays a role in the regulation of cell expansion in leaf and cotyledons tissues. Component of a network formed by miR396, the GRFs and their interacting factors (GIFs) acting in the regulation of meristem function, at least partially through the control of cell proliferation. microRNA396-GRF1/GRF3 regulatory module acts as a developmental regulator in the reprogramming of root cells during cyst nematode infection, leading to the formation of the syncytium. This Arabidopsis thaliana (Mouse-ear cress) protein is Growth-regulating factor 3 (GRF3).